A 158-amino-acid polypeptide reads, in one-letter code: Large ribosomal subunit protein uL18 (158 aa).

It belongs to the universal ribosomal protein uL18 family. Part of the 50S ribosomal subunit. Contacts the 5S and 23S rRNAs.

Its function is as follows. This is one of the proteins that bind and probably mediate the attachment of the 5S RNA into the large ribosomal subunit, where it forms part of the central protuberance. This chain is Large ribosomal subunit protein uL18, found in Picrophilus torridus (strain ATCC 700027 / DSM 9790 / JCM 10055 / NBRC 100828 / KAW 2/3).